The chain runs to 229 residues: Complex I assembly factor TMEM126B, mitochondrial (229 aa).

4 helical membrane-spanning segments follow: residues 71–91 (IRGT…ANLV), 109–129 (LTTL…TDAL), 140–160 (VLRS…ALAF), and 198–218 (VPLL…YAVC).

As to quaternary structure, part of the mitochondrial complex I assembly/MCIA complex that comprises at least the core subunits TMEM126B, NDUFAF1, ECSIT and ACAD9 and complement subunits such as COA1 and TMEM186. Associates with the intermediate 370 kDa subcomplex of incompletely assembled complex I. Interacts with TMEM70.

It localises to the mitochondrion membrane. As part of the MCIA complex, involved in the assembly of the mitochondrial complex I. Participates in constructing the membrane arm of complex I. The chain is Complex I assembly factor TMEM126B, mitochondrial from Rattus norvegicus (Rat).